Reading from the N-terminus, the 1370-residue chain is DNA-directed RNA polymerase subunit beta (1370 aa).

The protein belongs to the RNA polymerase beta chain family. As to quaternary structure, the RNAP catalytic core consists of 2 alpha, 1 beta, 1 beta' and 1 omega subunit. When a sigma factor is associated with the core the holoenzyme is formed, which can initiate transcription.

It carries out the reaction RNA(n) + a ribonucleoside 5'-triphosphate = RNA(n+1) + diphosphate. Its function is as follows. DNA-dependent RNA polymerase catalyzes the transcription of DNA into RNA using the four ribonucleoside triphosphates as substrates. The sequence is that of DNA-directed RNA polymerase subunit beta from Geotalea daltonii (strain DSM 22248 / JCM 15807 / FRC-32) (Geobacter daltonii).